The chain runs to 499 residues: Glutamyl-tRNA(Gln) amidotransferase subunit A (499 aa).

Catalysis depends on charge relay system residues Lys-76 and Ser-151. The Acyl-ester intermediate role is filled by Ser-175.

This sequence belongs to the amidase family. GatA subfamily. In terms of assembly, heterotrimer of A, B and C subunits.

It catalyses the reaction L-glutamyl-tRNA(Gln) + L-glutamine + ATP + H2O = L-glutaminyl-tRNA(Gln) + L-glutamate + ADP + phosphate + H(+). Allows the formation of correctly charged Gln-tRNA(Gln) through the transamidation of misacylated Glu-tRNA(Gln) in organisms which lack glutaminyl-tRNA synthetase. The reaction takes place in the presence of glutamine and ATP through an activated gamma-phospho-Glu-tRNA(Gln). The protein is Glutamyl-tRNA(Gln) amidotransferase subunit A of Rhodopirellula baltica (strain DSM 10527 / NCIMB 13988 / SH1).